The chain runs to 472 residues: Glutamine synthetase (472 aa).

One can recognise a GS beta-grasp domain in the interval 17 to 101 (NNVKFVLLRF…IRCSVYEPTT (85 aa)). Residues 109–472 (PRSIAIRAEN…HPVEFEMYYA (364 aa)) form the GS catalytic domain. Positions 134 and 136 each coordinate Mg(2+). Glu212 serves as a coordination point for ATP. Mg(2+)-binding residues include Glu217 and Glu225. L-glutamate-binding positions include 269–270 (NG) and Gly270. His274 lines the Mg(2+) pocket. ATP-binding positions include 276-278 (NMS) and Ser278. The L-glutamate site is built by Arg326, Glu332, and Arg344. ATP contacts are provided by Arg344, Arg349, and Lys357. Glu362 provides a ligand contact to Mg(2+). Arg364 is a binding site for L-glutamate. Residue Tyr402 is modified to O-AMP-tyrosine.

It belongs to the glutamine synthetase family. In terms of assembly, oligomer of 12 subunits arranged in the form of two hexameric ring. Mg(2+) serves as cofactor.

The protein resides in the cytoplasm. The enzyme catalyses L-glutamate + NH4(+) + ATP = L-glutamine + ADP + phosphate + H(+). Its activity is regulated as follows. The activity of this enzyme could be controlled by adenylation under conditions of abundant glutamine. Catalyzes the ATP-dependent biosynthesis of glutamine from glutamate and ammonia. This Haemophilus influenzae (strain ATCC 51907 / DSM 11121 / KW20 / Rd) protein is Glutamine synthetase.